The following is a 292-amino-acid chain: Porphobilinogen deaminase (292 aa).

Cysteine 235 is modified (S-(dipyrrolylmethanemethyl)cysteine).

This sequence belongs to the HMBS family. In terms of assembly, monomer. Dipyrromethane serves as cofactor.

The enzyme catalyses 4 porphobilinogen + H2O = hydroxymethylbilane + 4 NH4(+). Its pathway is porphyrin-containing compound metabolism; protoporphyrin-IX biosynthesis; coproporphyrinogen-III from 5-aminolevulinate: step 2/4. Its function is as follows. Tetrapolymerization of the monopyrrole PBG into the hydroxymethylbilane pre-uroporphyrinogen in several discrete steps. The protein is Porphobilinogen deaminase of Acetivibrio thermocellus (strain ATCC 27405 / DSM 1237 / JCM 9322 / NBRC 103400 / NCIMB 10682 / NRRL B-4536 / VPI 7372) (Clostridium thermocellum).